Consider the following 114-residue polypeptide: Large ribosomal subunit protein uL22 (114 aa).

This sequence belongs to the universal ribosomal protein uL22 family. In terms of assembly, part of the 50S ribosomal subunit.

Its function is as follows. This protein binds specifically to 23S rRNA; its binding is stimulated by other ribosomal proteins, e.g. L4, L17, and L20. It is important during the early stages of 50S assembly. It makes multiple contacts with different domains of the 23S rRNA in the assembled 50S subunit and ribosome. In terms of biological role, the globular domain of the protein is located near the polypeptide exit tunnel on the outside of the subunit, while an extended beta-hairpin is found that lines the wall of the exit tunnel in the center of the 70S ribosome. In Streptococcus mutans serotype c (strain ATCC 700610 / UA159), this protein is Large ribosomal subunit protein uL22.